We begin with the raw amino-acid sequence, 144 residues long: Snake venom vascular endothelial growth factor toxin cratrin (144 aa).

The signal sequence occupies residues 1–24; the sequence is MAVYLLAVAILFCIQGWPSGTVQG. Gln-25 is modified (pyrrolidone carboxylic acid). 3 disulfide bridges follow: Cys-38-Cys-80, Cys-69-Cys-115, and Cys-73-Cys-117. A disordered region spans residues 119–144; the sequence is PRSTVNNGKRKKNPKEGEPRAKFPLV. The span at 132-144 shows a compositional bias: basic and acidic residues; sequence PKEGEPRAKFPLV.

Belongs to the PDGF/VEGF growth factor family. Snake venom VEGF subfamily. Homodimer; disulfide-linked. Interacts with VEGF receptor-1 (FLT1) with a high affinity, whereas it binds to VEGF receptor-2 (KDR) with a low affinity. Does not bind VEGF receptor-3 (FLT4). Expressed by the venom gland.

The protein resides in the secreted. Its function is as follows. Snake venom VEGFs that may contribute to venom dispersion and prey subjugation by inducing vascular permeability and hypotension. This protein induces an increase in capillary permeability after intradermal injection, as well as a drastic hypotensive effect after intravenous injection. The hypotension is mediated by nitric oxide (NO), which is produced by VEGF-activated endothelium NO synthase. Also induces angiogenesis in vitro. Like other crotalid VEGFs, this protein interacts with VEGF receptor-1 (FLT1) with a high affinity, whereas it binds to VEGF receptor-2 (KDR) with a low affinity. This is Snake venom vascular endothelial growth factor toxin cratrin from Crotalus atrox (Western diamondback rattlesnake).